Here is a 180-residue protein sequence, read N- to C-terminus: MSFFTLMALAVALGTDALSLSVGIGLTGISRRRILQISATVLLFHIFMPLTGWLVGEFTGSLIGRAAAVIGSLLLVGLGVKMIWAAWRNGGETEPSLVRFNFWGLLLLGASVSMDALSAGFTLGTRQVNLLLAAGVIGLVAGAMTAGGLVFGRFLGSRVGERAQLLGGLILVGIGIKLFF.

6 helical membrane passes run 6–26 (LMALAVALGTDALSLSVGIGL), 34–54 (ILQISATVLLFHIFMPLTGWL), 67–87 (AAVIGSLLLVGLGVKMIWAAW), 102–122 (FWGLLLLGASVSMDALSAGFT), 131–151 (LLAAGVIGLVAGAMTAGGLVF), and 160–180 (GERAQLLGGLILVGIGIKLFF).

The protein belongs to the MntP (TC 9.B.29) family.

Its subcellular location is the cell membrane. Functionally, probably functions as a manganese efflux pump. The protein is Putative manganese efflux pump MntP of Pelotomaculum thermopropionicum (strain DSM 13744 / JCM 10971 / SI).